The primary structure comprises 208 residues: Protein-L-isoaspartate O-methyltransferase (208 aa).

S59 is a catalytic residue.

It belongs to the methyltransferase superfamily. L-isoaspartyl/D-aspartyl protein methyltransferase family.

It localises to the cytoplasm. The catalysed reaction is [protein]-L-isoaspartate + S-adenosyl-L-methionine = [protein]-L-isoaspartate alpha-methyl ester + S-adenosyl-L-homocysteine. Its function is as follows. Catalyzes the methyl esterification of L-isoaspartyl residues in peptides and proteins that result from spontaneous decomposition of normal L-aspartyl and L-asparaginyl residues. It plays a role in the repair and/or degradation of damaged proteins. This is Protein-L-isoaspartate O-methyltransferase from Aliivibrio fischeri (strain ATCC 700601 / ES114) (Vibrio fischeri).